The chain runs to 466 residues: Asparagine--tRNA ligase (466 aa).

This sequence belongs to the class-II aminoacyl-tRNA synthetase family. Homodimer.

It is found in the cytoplasm. It catalyses the reaction tRNA(Asn) + L-asparagine + ATP = L-asparaginyl-tRNA(Asn) + AMP + diphosphate + H(+). This chain is Asparagine--tRNA ligase, found in Shewanella loihica (strain ATCC BAA-1088 / PV-4).